Reading from the N-terminus, the 86-residue chain is UPF0297 protein SSP1144 (86 aa).

The protein belongs to the UPF0297 family.

The chain is UPF0297 protein SSP1144 from Staphylococcus saprophyticus subsp. saprophyticus (strain ATCC 15305 / DSM 20229 / NCIMB 8711 / NCTC 7292 / S-41).